The chain runs to 371 residues: Cell division cycle-associated protein 7 (371 aa).

2 disordered regions span residues 60 to 110 and 140 to 188; these read TRSQ…EDES and PGSF…SRIL. The span at 94-103 shows a compositional bias: polar residues; it reads PSENSVTDSN. At Ser-142 the chain carries Phosphoserine. Residues 146–170 are interaction with MYC; it reads RHPLPGSDSQSRRPRRRTFPGVASR. Positions 160-176 match the Nuclear localization signal motif; that stretch reads RRRTFPGVASRRNPERR. Thr-163 bears the Phosphothreonine mark. A Phosphoserine modification is found at Ser-190. Lys-204 is covalently cross-linked (Glycyl lysine isopeptide (Lys-Gly) (interchain with G-Cter in SUMO2)). The segment at 247-371 is mediates transcriptional activity; it reads EEELENVCSN…SLKQEFEMQA (125 aa).

Interacts with MYC (via C-terminus), YWHAE and YWHAZ. Phosphorylation at Thr-163 promotes interaction with YWHAE and YWHAZ, dissociation from MYC and sequestration in the cytoplasm. In vitro, phosphorylated at Thr-163 by AKT. In terms of tissue distribution, ubiquitous with higher level in thymus and small intestine. Overexpressed in a large number of tumors, in blood from patients with acute myelogenous leukemia (AML) and in chronic myelogenous leukemia (CML) blast crisis.

Its subcellular location is the nucleus. The protein localises to the cytoplasm. In terms of biological role, participates in MYC-mediated cell transformation and apoptosis; induces anchorage-independent growth and clonogenicity in lymphoblastoid cells. Insufficient to induce tumorigenicity when overexpressed but contributes to MYC-mediated tumorigenesis. May play a role as transcriptional regulator. This chain is Cell division cycle-associated protein 7 (CDCA7), found in Homo sapiens (Human).